We begin with the raw amino-acid sequence, 161 residues long: uncharacterized protein (161 aa).

This sequence to R.leguminosarum PsiB.

This is an uncharacterized protein from Sinorhizobium fredii (strain NBRC 101917 / NGR234).